The sequence spans 172 residues: Large ribosomal subunit protein uL10 (172 aa).

Belongs to the universal ribosomal protein uL10 family. Part of the ribosomal stalk of the 50S ribosomal subunit. The N-terminus interacts with L11 and the large rRNA to form the base of the stalk. The C-terminus forms an elongated spine to which L12 dimers bind in a sequential fashion forming a multimeric L10(L12)X complex.

Its function is as follows. Forms part of the ribosomal stalk, playing a central role in the interaction of the ribosome with GTP-bound translation factors. The protein is Large ribosomal subunit protein uL10 of Chlorobium luteolum (strain DSM 273 / BCRC 81028 / 2530) (Pelodictyon luteolum).